The sequence spans 221 residues: uncharacterized protein (221 aa).

4 consecutive transmembrane segments (helical) span residues 41–63 (TGNI…HSLI), 78–100 (AVMY…SSLS), 141–163 (ILAY…ISFL), and 178–200 (LILR…VNLF).

It localises to the cell membrane. This is an uncharacterized protein from Archaeoglobus fulgidus (strain ATCC 49558 / DSM 4304 / JCM 9628 / NBRC 100126 / VC-16).